A 1265-amino-acid chain; its full sequence is Kinesin-like protein Klp98A (1265 aa).

Residues 3-364 form the Kinesin motor domain; the sequence is SLKVAVRVRP…LRYANRAKNI (362 aa). An ATP-binding site is contributed by 100–107; the sequence is GQTGSGKT. Disordered stretches follow at residues 597-621, 828-864, and 884-954; these read GASP…DPEL, EAES…DVSK, and VSSP…CTPS. Coiled coils occupy residues 619–670 and 768–848; these read PELQ…EEMD and AQFI…LGNK. 3 stretches are compositionally biased toward polar residues: residues 846-857, 884-901, and 917-927; these read GNKSMSTSTSTN, VSSP…SNCS, and SGSSEETSRTC. A compositionally biased stretch (gly residues) spans 933-946; the sequence is SGSGSGSVGIGGSG. A coiled-coil region spans residues 1035–1071; that stretch reads DLNKAQLDEHIADLQDLQRRYIQMEQEMLQSVQDLEA. Residues 1129-1259 form the PX domain; it reads GEHFITIPSF…SFFKKGLFEN (131 aa).

Belongs to the TRAFAC class myosin-kinesin ATPase superfamily. Kinesin family. Interacts with Atg8a and Rab14.

The protein resides in the early endosome. Plus end-directed motor protein involved in asymmetric cell division of sensory organ precursor (SOP) cells by playing a role in the asymmetric localization of Sara-expressing endosomes to the pIIa daughter cell but not to the pIIb cell. Targets Sara-expressing endosomes to the central spindle which is symmetrically arranged in early cell division. During late cytokinesis, central spindle asymmetry is generated by enrichment of Patronin on the pIIb side which protects microtubules from depolymerization by Klp10A while unprotected microtubules on the pIIa side are disassembled by Klp10A, leading to the asymmetric delivery of Sara-expressing endosomes to the pIIa daughter cell. Also plays a role in regulation of autophagosome formation, fusion and positioning and is required for normal localization of Rab14. The sequence is that of Kinesin-like protein Klp98A from Drosophila melanogaster (Fruit fly).